Reading from the N-terminus, the 418-residue chain is Serine--tRNA ligase (418 aa).

An L-serine-binding site is contributed by 226–228; sequence TSE. ATP contacts are provided by residues 257-259 and Val-273; that span reads RRE. An L-serine-binding site is contributed by Glu-280. 344 to 347 lines the ATP pocket; it reads ELTS. Thr-379 contributes to the L-serine binding site.

Belongs to the class-II aminoacyl-tRNA synthetase family. Type-1 seryl-tRNA synthetase subfamily. As to quaternary structure, homodimer. The tRNA molecule binds across the dimer.

Its subcellular location is the cytoplasm. The enzyme catalyses tRNA(Ser) + L-serine + ATP = L-seryl-tRNA(Ser) + AMP + diphosphate + H(+). The catalysed reaction is tRNA(Sec) + L-serine + ATP = L-seryl-tRNA(Sec) + AMP + diphosphate + H(+). Its pathway is aminoacyl-tRNA biosynthesis; selenocysteinyl-tRNA(Sec) biosynthesis; L-seryl-tRNA(Sec) from L-serine and tRNA(Sec): step 1/1. In terms of biological role, catalyzes the attachment of serine to tRNA(Ser). Is also able to aminoacylate tRNA(Sec) with serine, to form the misacylated tRNA L-seryl-tRNA(Sec), which will be further converted into selenocysteinyl-tRNA(Sec). The polypeptide is Serine--tRNA ligase (Mycobacteroides abscessus (strain ATCC 19977 / DSM 44196 / CCUG 20993 / CIP 104536 / JCM 13569 / NCTC 13031 / TMC 1543 / L948) (Mycobacterium abscessus)).